We begin with the raw amino-acid sequence, 540 residues long: 2,3-bisphosphoglycerate-independent phosphoglycerate mutase (540 aa).

The Mn(2+) site is built by Asp-13 and Ser-63. The active-site Phosphoserine intermediate is Ser-63. Substrate-binding positions include His-124, 154 to 155, Arg-186, Arg-192, 262 to 265, and Lys-356; these read RD and RPDR. Residues Asp-423, His-427, Asp-464, His-465, and His-483 each contribute to the Mn(2+) site.

The protein belongs to the BPG-independent phosphoglycerate mutase family. Monomer. Requires Mn(2+) as cofactor.

The catalysed reaction is (2R)-2-phosphoglycerate = (2R)-3-phosphoglycerate. It functions in the pathway carbohydrate degradation; glycolysis; pyruvate from D-glyceraldehyde 3-phosphate: step 3/5. Catalyzes the interconversion of 2-phosphoglycerate and 3-phosphoglycerate. The sequence is that of 2,3-bisphosphoglycerate-independent phosphoglycerate mutase from Chloroflexus aggregans (strain MD-66 / DSM 9485).